A 400-amino-acid chain; its full sequence is Phosphoglycerate kinase (400 aa).

Residues 21-23, arginine 37, 60-63, arginine 121, and arginine 154 each bind substrate; these read DFN and HLGR. Residues lysine 204, glutamate 326, and 355 to 358 contribute to the ATP site; that span reads GGDS.

It belongs to the phosphoglycerate kinase family. In terms of assembly, monomer.

Its subcellular location is the cytoplasm. The enzyme catalyses (2R)-3-phosphoglycerate + ATP = (2R)-3-phospho-glyceroyl phosphate + ADP. It functions in the pathway carbohydrate degradation; glycolysis; pyruvate from D-glyceraldehyde 3-phosphate: step 2/5. The polypeptide is Phosphoglycerate kinase (Chloroflexus aurantiacus (strain ATCC 29366 / DSM 635 / J-10-fl)).